The chain runs to 150 residues: Large ribosomal subunit protein bL9 (150 aa).

Belongs to the bacterial ribosomal protein bL9 family.

Its function is as follows. Binds to the 23S rRNA. The protein is Large ribosomal subunit protein bL9 of Paraburkholderia xenovorans (strain LB400).